The primary structure comprises 267 residues: Translation initiation factor 2 subunit alpha (267 aa).

The S1 motif domain occupies 12 to 83 (GEYVIATVKE…RRKTVDVSLK (72 aa)).

Belongs to the eIF-2-alpha family. Heterotrimer composed of an alpha, a beta and a gamma chain.

In terms of biological role, eIF-2 functions in the early steps of protein synthesis by forming a ternary complex with GTP and initiator tRNA. The sequence is that of Translation initiation factor 2 subunit alpha from Staphylothermus marinus (strain ATCC 43588 / DSM 3639 / JCM 9404 / F1).